A 197-amino-acid chain; its full sequence is Imidazoleglycerol-phosphate dehydratase (197 aa).

This sequence belongs to the imidazoleglycerol-phosphate dehydratase family.

It is found in the cytoplasm. The enzyme catalyses D-erythro-1-(imidazol-4-yl)glycerol 3-phosphate = 3-(imidazol-4-yl)-2-oxopropyl phosphate + H2O. It functions in the pathway amino-acid biosynthesis; L-histidine biosynthesis; L-histidine from 5-phospho-alpha-D-ribose 1-diphosphate: step 6/9. This chain is Imidazoleglycerol-phosphate dehydratase, found in Marinomonas sp. (strain MWYL1).